A 240-amino-acid chain; its full sequence is Dihydromonapterin reductase (240 aa).

The active-site Proton acceptor is Tyr-152.

Belongs to the short-chain dehydrogenases/reductases (SDR) family. FolM subfamily.

The enzyme catalyses (6S)-5,6,7,8-tetrahydrofolate + NADP(+) = 7,8-dihydrofolate + NADPH + H(+). It carries out the reaction 7,8-dihydromonapterin + NADPH + H(+) = 5,6,7,8-tetrahydromonapterin + NADP(+). In terms of biological role, catalyzes the reduction of dihydromonapterin to tetrahydromonapterin. Also has lower activity with dihydrofolate. The chain is Dihydromonapterin reductase (folM) from Escherichia coli O139:H28 (strain E24377A / ETEC).